A 131-amino-acid chain; its full sequence is Dihydroneopterin aldolase 2 (131 aa).

Substrate-binding positions include E29, Y61, and 80 to 81; that span reads LE. K107 (proton donor/acceptor) is an active-site residue.

It belongs to the DHNA family. As to quaternary structure, homooctamer. Forms a hollow cylinder assembled from two ring-shaped tetramers. As to expression, expressed in roots, leaves, stems and siliques.

The enzyme catalyses 7,8-dihydroneopterin = 6-hydroxymethyl-7,8-dihydropterin + glycolaldehyde. The protein operates within cofactor biosynthesis; tetrahydrofolate biosynthesis; 2-amino-4-hydroxy-6-hydroxymethyl-7,8-dihydropteridine diphosphate from 7,8-dihydroneopterin triphosphate: step 3/4. Catalyzes the conversion of 7,8-dihydroneopterin into 6-hydroxymethyl-7,8-dihydropterin, a biosynthetic precursor of the vitamin tetrahydrofolate. Can use L-threo-dihydroneopterin and D-erythro-dihydroneopterin as substrates for the formation of 6-hydroxymethyldihydropterin, but it can also catalyze the epimerization of carbon 2' of dihydroneopterin and dihydromonapterin. The chain is Dihydroneopterin aldolase 2 from Arabidopsis thaliana (Mouse-ear cress).